Consider the following 1649-residue polypeptide: PHD and RING finger domain-containing protein 1 (1649 aa).

Residues 1–79 are disordered; the sequence is MDDDSLDELV…RSGSEDSEDD (79 aa). Serine 5 is subject to Phosphoserine. Acidic residues predominate over residues 54–79; the sequence is TDGEDEGASEEEDLEDRSGSEDSEDD. The RING-type; degenerate zinc finger occupies 108–149; the sequence is CPICLNAFRDQAVGTPENCAHYFCLDCIVEWSKNANSCPVDR. Residues 183–233 form a PHD-type zinc finger; sequence PTFCEVCGRSDREDRLLLCDGCDAGYHMECLDPPLQEVPVDEWFCPECAAP. The disordered stretch occupies residues 324-398; that stretch reads VYQRPLTPRT…TRSRIARTLG (75 aa). Threonine 330 carries the post-translational modification Phosphothreonine. Residues 334-353 show a composition bias toward basic residues; the sequence is PARRKRKTRRRKKVPGRKKT. Low complexity predominate over residues 354–366; that stretch reads PSGPSAKSKSSAT. Over residues 367–382 the composition is skewed to basic residues; that stretch reads RSKKRQHRVKKRRGKK. Serine 445 and serine 455 each carry phosphoserine. Disordered regions lie at residues 534-600, 644-871, 888-1240, and 1281-1395; these read KRAA…GAPV, SAAS…PKAQ, FGTE…KAPL, and IQLD…PLLR. Over residues 568 to 589 the composition is skewed to polar residues; sequence SPAQGPSGNRPQSTGLSCQGRS. Composition is skewed to basic and acidic residues over residues 685–697 and 727–742; these read IRRD…RDAA and TRAE…REPG. A compositionally biased stretch (polar residues) spans 786–796; sequence AHSSQLSSPGF. Residues 802-812 are compositionally biased toward basic and acidic residues; it reads PVDDKEQRKEN. A phosphoserine mark is found at serine 814, serine 845, serine 846, serine 864, serine 867, and serine 915. 2 stretches are compositionally biased toward polar residues: residues 835-848 and 859-871; these read PTGS…SSPE and ITRT…PKAQ. Threonine 917 is subject to Phosphothreonine. Phosphoserine is present on residues serine 936, serine 973, and serine 991. Residues 988–999 are compositionally biased toward low complexity; that stretch reads RPPSRSRSTSSS. The span at 1000 to 1011 shows a compositional bias: basic residues; it reads RSRKKAKRKRVS. The segment covering 1012–1030 has biased composition (basic and acidic residues); that stretch reads REHGRTRSGTRSESRDRSS. The span at 1043–1053 shows a compositional bias: basic residues; the sequence is RRQRSKAKSRR. Residues 1054 to 1063 are compositionally biased toward basic and acidic residues; the sequence is SSSDRSSSRE. A compositionally biased stretch (basic residues) spans 1064 to 1090; that stretch reads RAKRKKAKDKSREHRRGPWGHSRRTSR. A compositionally biased stretch (low complexity) spans 1091–1101; sequence SRSGSPGSSSY. The span at 1106–1118 shows a compositional bias: basic residues; that stretch reads SRKKKKRRSASRP. 2 positions are modified to phosphoserine: serine 1124 and serine 1128. Basic and acidic residues-rich tracts occupy residues 1141–1151 and 1181–1198; these read RSHERPDRKES and REKW…KGAV. Phosphoserine occurs at positions 1202 and 1229. Over residues 1284–1297 the composition is skewed to low complexity; sequence DDMSSPPSPESTDS. The span at 1345–1356 shows a compositional bias: basic and acidic residues; it reads HLLRPDAAEKAE. Phosphoserine is present on residues serine 1359, serine 1360, and serine 1371. The residue at position 1404 (threonine 1404) is a Phosphothreonine. 4 disordered regions span residues 1407 to 1439, 1455 to 1486, 1526 to 1556, and 1630 to 1649; these read LQES…WDME, FPSH…AQPS, TPAS…EKTK, and MRRH…GAEG. Residues 1531–1540 are compositionally biased toward polar residues; sequence PASQATAASN. Over residues 1541-1556 the composition is skewed to basic and acidic residues; it reads SEEKTPAPRLAAEKTK. The stretch at 1549–1579 forms a coiled coil; that stretch reads RLAAEKTKKEEYMKKLHMQERAVEEVKLAIK.

In terms of assembly, interacts with POLR2A (via the C-terminal domain).

The chain is PHD and RING finger domain-containing protein 1 (PHRF1) from Homo sapiens (Human).